Reading from the N-terminus, the 227-residue chain is Calcium-binding protein 1 (227 aa).

G2 carries the N-myristoyl glycine lipid modification. A lipid anchor (S-palmitoyl cysteine) is attached at C4. 4 EF-hand domains span residues 82-117 (EEIEELREAFREFDKDKDGYINCRDLGNCMRTMGYM), 136-153 (GHVDFDDFVELMGPKLLA), 159-194 (IGVKELRDAFREFDTNGDGEISTSELREAMRKLLGH), and 196-227 (VGHRDIEEIIRDVDLNGDGRVDFEEFVRMMSR). The Ca(2+) site is built by D95, D97, D99, Y101, and D106. Ca(2+) is bound by residues D172, N174, D176, and E178. Residue S180 is modified to Phosphoserine. Ca(2+) is bound by residues E183, D209, N211, D213, R215, and E220.

As to quaternary structure, homodimer; when bound to calcium or magnesium. Interacts (via C-terminus) with ITPR1, ITPR2 and ITPR3. This binding is calcium dependent and the interaction correlates with calcium concentration. An additional calcium-independent interaction with the N-terminus of ITPR1 results in a decreased InsP(3) binding to the receptor. Interacts with CACNA1A (via C-terminal CDB motif) in the pre- and postsynaptic membranes. Interacts with CACNA1D and CACNA1C (via C-terminal C and IQ motifs). The binding to the C motif is calcium independent whereas the binding to IQ requires the presence of calcium and is mutually exclusive with calmodulin binding. Interacts with TRPC5 (via C-terminus). Interacts (via EF-hands 1 and 2) at microtubules with MAP1LC3B. Interacts with MYO1C. Interacts (via EF-hands 1 and 2) with NSMF (via the central NLS-containing motif region), the interaction occurs in a calcium dependent manner after synaptic NMDA receptor stimulation and prevents nuclear import of NSMF. Interacts with SPACA9 homolog. Phosphorylated. The phosphorylation regulates the activity. As to expression, expressed in the inner retina, specifically in amacrine cells and in cone OFF-bipolar cells (at protein level).

Modulates calcium-dependent activity of inositol 1,4,5-triphosphate receptors (ITPRs). Inhibits agonist-induced intracellular calcium signaling. Enhances inactivation and does not support calcium-dependent facilitation of voltage-dependent P/Q-type calcium channels. Causes calcium-dependent facilitation and inhibits inactivation of L-type calcium channels by binding to the same sites as calmodulin in the C-terminal domain of CACNA1C, but has an opposite effect on channel function. Suppresses the calcium-dependent inactivation of CACNA1D. Inhibits TRPC5 channels. Prevents NMDA receptor-induced cellular degeneration. Required for the normal transfer of light signals through the retina. The chain is Calcium-binding protein 1 (Cabp1) from Mus musculus (Mouse).